Reading from the N-terminus, the 218-residue chain is MQPSFWHDKWASQQIGFHLDEVNALLIDYWPQLELAAGSQVFVPLCGKTLDLCYLAEQGLEVIGCELNQSAVEQFFSDNELPVERQSSGEHECYRTEQVSIYQGDLFRLPKEPLEAVSGFYDRAALIAWPPEMRQQYVECLAGLLPPKSIGLLITLDYPQEALNGPPFAVSDAWIQEHMSPYFEIECLSTQDVLAENPRFVKKQVPWLTESVYRLVRR.

S-adenosyl-L-methionine is bound by residues tryptophan 10, leucine 45, glutamate 66, and arginine 123.

It belongs to the class I-like SAM-binding methyltransferase superfamily. TPMT family.

It localises to the cytoplasm. The catalysed reaction is S-adenosyl-L-methionine + a thiopurine = S-adenosyl-L-homocysteine + a thiopurine S-methylether.. In Shewanella loihica (strain ATCC BAA-1088 / PV-4), this protein is Thiopurine S-methyltransferase.